The following is a 347-amino-acid chain: MAAAIRHDWQHDELQALFDLPFPELLFRAAAVHREHFDPAQVQVSTLLSVKTGGCPEDCAYCPQAQRYNTGVNAQKLMETDAVLAKARQAKAAGASRFCMGAAWRSPKDRDIPKVAAMIAGVKALGLETCATLGMLSGGQARALKDAGLDYYNHNLDTAPDYYDSIIHTRQYQDRLDTLEHVRDAGLKTCCGGIVGMGETRAQRVGLLLALATLPAHPDSVPINKLVQVAGTPLHGSAELDPFEFVRMIAVARIVMPRSMVRLSAGREAMSDELQALCFVAGANSIFYGDKLLTTGNPESERDLALFARLGLQPMAVQVDAEGHDHGGTVHADISADAPGCGCAHAA.

Residues 40–258 (AQVQVSTLLS…IAVARIVMPR (219 aa)) form the Radical SAM core domain. [4Fe-4S] cluster contacts are provided by cysteine 55, cysteine 59, and cysteine 62. Residues cysteine 99, cysteine 130, cysteine 190, and arginine 262 each contribute to the [2Fe-2S] cluster site.

Belongs to the radical SAM superfamily. Biotin synthase family. As to quaternary structure, homodimer. The cofactor is [4Fe-4S] cluster. It depends on [2Fe-2S] cluster as a cofactor.

It catalyses the reaction (4R,5S)-dethiobiotin + (sulfur carrier)-SH + 2 reduced [2Fe-2S]-[ferredoxin] + 2 S-adenosyl-L-methionine = (sulfur carrier)-H + biotin + 2 5'-deoxyadenosine + 2 L-methionine + 2 oxidized [2Fe-2S]-[ferredoxin]. The protein operates within cofactor biosynthesis; biotin biosynthesis; biotin from 7,8-diaminononanoate: step 2/2. In terms of biological role, catalyzes the conversion of dethiobiotin (DTB) to biotin by the insertion of a sulfur atom into dethiobiotin via a radical-based mechanism. This Stenotrophomonas maltophilia (strain R551-3) protein is Biotin synthase.